A 38-amino-acid polypeptide reads, in one-letter code: Large ribosomal subunit protein bL36 (38 aa).

The protein belongs to the bacterial ribosomal protein bL36 family.

In Karelsulcia muelleri (strain GWSS) (Sulcia muelleri), this protein is Large ribosomal subunit protein bL36.